The chain runs to 479 residues: Ribosomal RNA small subunit methyltransferase F (479 aa).

Residues 125-131, E149, D176, and D194 contribute to the S-adenosyl-L-methionine site; that span reads AAAPGSK. C247 acts as the Nucleophile in catalysis.

It belongs to the class I-like SAM-binding methyltransferase superfamily. RsmB/NOP family.

The protein resides in the cytoplasm. The catalysed reaction is cytidine(1407) in 16S rRNA + S-adenosyl-L-methionine = 5-methylcytidine(1407) in 16S rRNA + S-adenosyl-L-homocysteine + H(+). Its function is as follows. Specifically methylates the cytosine at position 1407 (m5C1407) of 16S rRNA. This Salmonella arizonae (strain ATCC BAA-731 / CDC346-86 / RSK2980) protein is Ribosomal RNA small subunit methyltransferase F.